The primary structure comprises 290 residues: Glucuronoxylan 4-O-methyltransferase 2 (290 aa).

Residues phenylalanine 8 to leucine 28 form a helical membrane-spanning segment.

This sequence belongs to the methyltransferase superfamily. As to expression, expressed in roots, rosette leaves and stems.

The protein localises to the golgi apparatus membrane. It carries out the reaction glucuronoxylan D-glucuronate + n S-adenosyl-L-methionine = glucuronoxylan 4-O-methyl-D-glucuronate + n S-adenosyl-L-homocysteine + n H(+). Its function is as follows. Methyltransferase catalyzing 4-O-methylation of glucuronic acid side chains on xylan. The sequence is that of Glucuronoxylan 4-O-methyltransferase 2 (GXM2) from Arabidopsis thaliana (Mouse-ear cress).